Reading from the N-terminus, the 498-residue chain is Guanosine-5'-triphosphate,3'-diphosphate pyrophosphatase (498 aa).

Belongs to the GppA/Ppx family. GppA subfamily.

It catalyses the reaction guanosine 3'-diphosphate 5'-triphosphate + H2O = guanosine 3',5'-bis(diphosphate) + phosphate + H(+). It participates in purine metabolism; ppGpp biosynthesis; ppGpp from GTP: step 2/2. Its function is as follows. Catalyzes the conversion of pppGpp to ppGpp. Guanosine pentaphosphate (pppGpp) is a cytoplasmic signaling molecule which together with ppGpp controls the 'stringent response', an adaptive process that allows bacteria to respond to amino acid starvation, resulting in the coordinated regulation of numerous cellular activities. This is Guanosine-5'-triphosphate,3'-diphosphate pyrophosphatase from Yersinia enterocolitica serotype O:8 / biotype 1B (strain NCTC 13174 / 8081).